Reading from the N-terminus, the 67-residue chain is Conotoxin Cl6.7 (67 aa).

The N-terminal stretch at 1–24 is a signal peptide; the sequence is MKVTAVLMVAVLVLTACQLTTANT. Positions 25–39 are excised as a propeptide; it reads TDYVRRIPARKSTMS. Disulfide bonds link C43-C58, C50-C62, and C57-C66.

Belongs to the conotoxin O1 superfamily. In terms of tissue distribution, expressed by the venom duct.

Its subcellular location is the secreted. In Californiconus californicus (California cone), this protein is Conotoxin Cl6.7.